We begin with the raw amino-acid sequence, 204 residues long: NADH-ubiquinone oxidoreductase subunit 9 (204 aa).

It belongs to the complex I 30 kDa subunit family. Complex I is composed of about 30 different subunits.

The protein resides in the mitochondrion inner membrane. It catalyses the reaction a ubiquinone + NADH + 5 H(+)(in) = a ubiquinol + NAD(+) + 4 H(+)(out). In terms of biological role, core subunit of the mitochondrial membrane respiratory chain NADH dehydrogenase (Complex I) that is believed to belong to the minimal assembly required for catalysis. Complex I functions in the transfer of electrons from NADH to the respiratory chain. The immediate electron acceptor for the enzyme is believed to be ubiquinone. The sequence is that of NADH-ubiquinone oxidoreductase subunit 9 (NAD9) from Reclinomonas americana.